The primary structure comprises 501 residues: Alveolysin (501 aa).

The N-terminal stretch at 1–32 (MKKKSNHLKGRKVLVSLLVSLQVFAFASISSA) is a signal peptide. The next 4 beta stranded transmembrane spans lie at 191 to 204 (QNQI…NAKV), 211 to 220 (IDFNAVANGE), 289 to 298 (SNDVQTAFKL), and 306 to 318 (QASG…YENS). A Conserved undecapeptide motif is present at residues 460-470 (ECTGLAWEWWR). A Cholesterol binding motif is present at residues 492–493 (TL).

Belongs to the cholesterol-dependent cytolysin family. As to quaternary structure, homooligomeric pore complex of 35 to 50 subunits; when inserted in the host membrane.

The protein localises to the secreted. Its subcellular location is the host cell membrane. Its activity is regulated as follows. Inhibited by cholesterol and thiol reagents. A cholesterol-dependent toxin that causes cytolysis by forming pores in cholesterol containing host membranes. After binding to target membranes, the protein undergoes a major conformation change, leading to its insertion in the host membrane and formation of an oligomeric pore complex. Cholesterol is required for binding to host cell membranes, membrane insertion and pore formation; cholesterol binding is mediated by a Thr-Leu pair in the C-terminus. Can be reversibly inactivated by oxidation. This Paenibacillus alvei (Bacillus alvei) protein is Alveolysin (alv).